Reading from the N-terminus, the 555-residue chain is Dihydroxy-acid dehydratase (555 aa).

Aspartate 78 contacts Mg(2+). [2Fe-2S] cluster is bound at residue cysteine 119. Mg(2+) contacts are provided by aspartate 120 and lysine 121. Lysine 121 bears the N6-carboxylysine mark. Cysteine 191 contacts [2Fe-2S] cluster. Position 444 (glutamate 444) interacts with Mg(2+). Catalysis depends on serine 470, which acts as the Proton acceptor.

Belongs to the IlvD/Edd family. In terms of assembly, homodimer. [2Fe-2S] cluster is required as a cofactor. It depends on Mg(2+) as a cofactor.

The catalysed reaction is (2R)-2,3-dihydroxy-3-methylbutanoate = 3-methyl-2-oxobutanoate + H2O. It carries out the reaction (2R,3R)-2,3-dihydroxy-3-methylpentanoate = (S)-3-methyl-2-oxopentanoate + H2O. The protein operates within amino-acid biosynthesis; L-isoleucine biosynthesis; L-isoleucine from 2-oxobutanoate: step 3/4. It functions in the pathway amino-acid biosynthesis; L-valine biosynthesis; L-valine from pyruvate: step 3/4. In terms of biological role, functions in the biosynthesis of branched-chain amino acids. Catalyzes the dehydration of (2R,3R)-2,3-dihydroxy-3-methylpentanoate (2,3-dihydroxy-3-methylvalerate) into 2-oxo-3-methylpentanoate (2-oxo-3-methylvalerate) and of (2R)-2,3-dihydroxy-3-methylbutanoate (2,3-dihydroxyisovalerate) into 2-oxo-3-methylbutanoate (2-oxoisovalerate), the penultimate precursor to L-isoleucine and L-valine, respectively. This Maridesulfovibrio salexigens (strain ATCC 14822 / DSM 2638 / NCIMB 8403 / VKM B-1763) (Desulfovibrio salexigens) protein is Dihydroxy-acid dehydratase.